Reading from the N-terminus, the 119-residue chain is Beta-2-microglobulin (119 aa).

Positions 1–20 (MARFVVAALLVLLSLSGLEA) are cleaved as a signal peptide. In terms of domain architecture, Ig-like C1-type spans 25–114 (PKIQVYSRHP…MTFPAPKTVK (90 aa)). Cysteine 45 and cysteine 100 are oxidised to a cystine.

The protein belongs to the beta-2-microglobulin family. In terms of assembly, heterodimer of an alpha chain and a beta chain. Beta-2-microglobulin is the beta-chain of major histocompatibility complex class I molecules.

It localises to the secreted. Functionally, component of the class I major histocompatibility complex (MHC). Involved in the presentation of peptide antigens to the immune system. The sequence is that of Beta-2-microglobulin (B2M) from Pithecia irrorata (Gray monk saki).